The primary structure comprises 138 residues: Nucleoside diphosphate kinase (138 aa).

6 residues coordinate ATP: K9, F57, R85, T91, R102, and N112. H115 serves as the catalytic Pros-phosphohistidine intermediate.

Belongs to the NDK family. In terms of assembly, homotetramer. Mg(2+) is required as a cofactor.

The protein resides in the cytoplasm. It catalyses the reaction a 2'-deoxyribonucleoside 5'-diphosphate + ATP = a 2'-deoxyribonucleoside 5'-triphosphate + ADP. It carries out the reaction a ribonucleoside 5'-diphosphate + ATP = a ribonucleoside 5'-triphosphate + ADP. Functionally, major role in the synthesis of nucleoside triphosphates other than ATP. The ATP gamma phosphate is transferred to the NDP beta phosphate via a ping-pong mechanism, using a phosphorylated active-site intermediate. The protein is Nucleoside diphosphate kinase of Exiguobacterium sibiricum (strain DSM 17290 / CCUG 55495 / CIP 109462 / JCM 13490 / 255-15).